The following is a 230-amino-acid chain: Transmembrane ascorbate ferrireductase 2 (230 aa).

A run of 2 helical transmembrane segments spans residues 5-25 and 50-70; these read VLGGFPIFMVVRVLGFIIAAL and VHPVMMVIGLILFNGEAMLAY. In terms of domain architecture, Cytochrome b561 spans 14–218; it reads VVRVLGFIIA…LGGFVILGVV (205 aa). Histidine 51 is a binding site for heme b. 2 residues coordinate L-ascorbate: lysine 77 and lysine 81. The chain crosses the membrane as a helical span at residues 82-102; it reads LVHLTLQLTAFILSLIGVWAA. Residue histidine 84 coordinates heme b. Monodehydro-L-ascorbate radical is bound by residues phenylalanine 105, histidine 106, and tyrosine 115. A heme b-binding site is contributed by histidine 118. A helical transmembrane segment spans residues 120–140; that stretch reads WLGLACLFLFAFQWAAGFVTY. 3 residues coordinate L-ascorbate: tyrosine 140, arginine 150, and alanine 151. Residue histidine 157 coordinates heme b. Residues 157–177 form a helical membrane-spanning segment; the sequence is HVFLGISIYALALVTATTGIL. 2 residues coordinate monodehydro-L-ascorbate radical: phenylalanine 182 and asparagine 186. A helical membrane pass occupies residues 198–218; the sequence is LVNTMGVLILILGGFVILGVV.

As to quaternary structure, homodimer. Heme b is required as a cofactor. In terms of tissue distribution, expressed in roots, seedlings, leaves and flowers. Expressed in the L1 layer of the shoot apex, in the epidermis of leaf primordia and young leaves and in vascular bundles. In the differentiation zone of the root, detected in the pericycle and in the epidermis, but not in the cortex. Strongly expressed in the cortical region of the root tip, in the meristematic tissue and in the epidermal cell layer of lateral roots, but not in the root caps. Highly expressed in unfertilized ovules. In mature embryos, expressed in the epidermis, cotyledon tips and root tips.

It is found in the membrane. The enzyme catalyses Fe(3+)(out) + L-ascorbate(in) = monodehydro-L-ascorbate radical(in) + Fe(2+)(out) + H(+). In terms of biological role, two-heme-containing cytochrome. Catalyzes ascorbate-dependent transmembrane ferric-chelate reduction. The chain is Transmembrane ascorbate ferrireductase 2 (CYB561B) from Arabidopsis thaliana (Mouse-ear cress).